Reading from the N-terminus, the 91-residue chain is UPF0250 protein PFLU_5418 (91 aa).

This sequence belongs to the UPF0250 family.

The protein is UPF0250 protein PFLU_5418 of Pseudomonas fluorescens (strain SBW25).